The sequence spans 64 residues: Putative isoleucine--tRNA ligase (64 aa).

This sequence belongs to the class-I aminoacyl-tRNA synthetase family. Member of a complex that includes annexin.

It carries out the reaction tRNA(Ile) + L-isoleucine + ATP = L-isoleucyl-tRNA(Ile) + AMP + diphosphate. This is Putative isoleucine--tRNA ligase from Physarum polycephalum (Slime mold).